Consider the following 158-residue polypeptide: NAD(P)H-quinone oxidoreductase subunit J, chloroplastic (158 aa).

The protein belongs to the complex I 30 kDa subunit family. As to quaternary structure, NDH is composed of at least 16 different subunits, 5 of which are encoded in the nucleus.

It localises to the plastid. The protein localises to the chloroplast thylakoid membrane. The enzyme catalyses a plastoquinone + NADH + (n+1) H(+)(in) = a plastoquinol + NAD(+) + n H(+)(out). It carries out the reaction a plastoquinone + NADPH + (n+1) H(+)(in) = a plastoquinol + NADP(+) + n H(+)(out). Its function is as follows. NDH shuttles electrons from NAD(P)H:plastoquinone, via FMN and iron-sulfur (Fe-S) centers, to quinones in the photosynthetic chain and possibly in a chloroplast respiratory chain. The immediate electron acceptor for the enzyme in this species is believed to be plastoquinone. Couples the redox reaction to proton translocation, and thus conserves the redox energy in a proton gradient. The chain is NAD(P)H-quinone oxidoreductase subunit J, chloroplastic from Acorus calamus var. americanus (American sweet flag).